The primary structure comprises 712 residues: Ribosomal RNA large subunit methyltransferase K/L (712 aa).

One can recognise a THUMP domain in the interval 46–157 (GAYQALLHSR…RENMVVSLDL (112 aa)).

The protein belongs to the methyltransferase superfamily. RlmKL family.

It is found in the cytoplasm. It carries out the reaction guanosine(2445) in 23S rRNA + S-adenosyl-L-methionine = N(2)-methylguanosine(2445) in 23S rRNA + S-adenosyl-L-homocysteine + H(+). It catalyses the reaction guanosine(2069) in 23S rRNA + S-adenosyl-L-methionine = N(2)-methylguanosine(2069) in 23S rRNA + S-adenosyl-L-homocysteine + H(+). Functionally, specifically methylates the guanine in position 2445 (m2G2445) and the guanine in position 2069 (m7G2069) of 23S rRNA. This chain is Ribosomal RNA large subunit methyltransferase K/L, found in Actinobacillus pleuropneumoniae serotype 7 (strain AP76).